A 94-amino-acid chain; its full sequence is Co-chaperonin GroES (94 aa).

This sequence belongs to the GroES chaperonin family. In terms of assembly, heptamer of 7 subunits arranged in a ring. Interacts with the chaperonin GroEL.

The protein resides in the cytoplasm. Functionally, together with the chaperonin GroEL, plays an essential role in assisting protein folding. The GroEL-GroES system forms a nano-cage that allows encapsulation of the non-native substrate proteins and provides a physical environment optimized to promote and accelerate protein folding. GroES binds to the apical surface of the GroEL ring, thereby capping the opening of the GroEL channel. The polypeptide is Co-chaperonin GroES (Clostridium botulinum (strain Alaska E43 / Type E3)).